The primary structure comprises 301 residues: MKQRTIAKNVDIVGIGLHKGVPVKMRLEPLDSDMGIIFYRSDAGVTIPVKKEFVVDTKMATVIGKDGVVISTIEHLLSAIYAYGIDNLRIVLDNDEVPVLDGSSAGYCMLIEEAGIKELEKSKKAIKIKKEIEITTEDGKRVTLKPSDRIVYDFEINFEHPAIGKQKFHFDYSIEEYKNNISRARTFGFLHEVQYLRSIGLAQGGSMENAIVLDKTKVLNPEGLRFDDEFVRHKILDAIGDMALLEYTLVGEYDAVAGSHHLNHLLTKKLYEDEANYEIIDLEEASSEASVFEMAYSKVES.

Zn(2+) is bound by residues His75, His233, and Asp237. His260 serves as the catalytic Proton donor.

It belongs to the LpxC family. It depends on Zn(2+) as a cofactor.

It carries out the reaction a UDP-3-O-[(3R)-3-hydroxyacyl]-N-acetyl-alpha-D-glucosamine + H2O = a UDP-3-O-[(3R)-3-hydroxyacyl]-alpha-D-glucosamine + acetate. Its pathway is glycolipid biosynthesis; lipid IV(A) biosynthesis; lipid IV(A) from (3R)-3-hydroxytetradecanoyl-[acyl-carrier-protein] and UDP-N-acetyl-alpha-D-glucosamine: step 2/6. In terms of biological role, catalyzes the hydrolysis of UDP-3-O-myristoyl-N-acetylglucosamine to form UDP-3-O-myristoylglucosamine and acetate, the committed step in lipid A biosynthesis. The protein is UDP-3-O-acyl-N-acetylglucosamine deacetylase of Aliarcobacter butzleri (strain RM4018) (Arcobacter butzleri).